A 309-amino-acid chain; its full sequence is Ornithine carbamoyltransferase (309 aa).

Carbamoyl phosphate-binding positions include 57 to 60 (STRT), Q84, R108, and 135 to 138 (HPCQ). L-ornithine is bound by residues N166, D226, and 230-231 (SM). Carbamoyl phosphate-binding positions include 265–266 (CL) and R293.

Belongs to the aspartate/ornithine carbamoyltransferase superfamily. OTCase family.

It is found in the cytoplasm. It carries out the reaction carbamoyl phosphate + L-ornithine = L-citrulline + phosphate + H(+). It participates in amino-acid biosynthesis; L-arginine biosynthesis; L-arginine from L-ornithine and carbamoyl phosphate: step 1/3. Functionally, reversibly catalyzes the transfer of the carbamoyl group from carbamoyl phosphate (CP) to the N(epsilon) atom of ornithine (ORN) to produce L-citrulline. The chain is Ornithine carbamoyltransferase from Rhizorhabdus wittichii (strain DSM 6014 / CCUG 31198 / JCM 15750 / NBRC 105917 / EY 4224 / RW1) (Sphingomonas wittichii).